A 1441-amino-acid polypeptide reads, in one-letter code: Gag-Pol polyprotein (1441 aa).

Residue Gly-2 is the site of N-myristoyl glycine; by host attachment. Positions 16–22 match the Nuclear export signal motif; the sequence is FEKIRLK. Residues 26 to 32 carry the Nuclear localization signal motif; sequence KKCYRLK. The interval 204-226 is disordered; it reads THPQQQPAQPGGGLRTPSGSDIA. 2 consecutive CCHC-type zinc fingers follow at residues 386-403 and 407-424; these read PICF…FFKA and KGCW…QCPK. Polar residues predominate over residues 444–466; sequence TGELSGTRGDSNSSTIRGETSAE. A disordered region spans residues 444 to 494; the sequence is TGELSGTRGDSNSSTIRGETSAENSEHLSEIRERAQAEDEGGEERGGFSFP. The span at 467 to 480 shows a compositional bias: basic and acidic residues; it reads NSEHLSEIRERAQA. Positions 513–584 constitute a Peptidase A2 domain; it reads IRALLDTGAD…TPIDIIGRNI (72 aa). Asp-518 serves as the catalytic For protease activity; shared with dimeric partner. Positions 640–830 constitute a Reverse transcriptase domain; that stretch reads EGKISRVDPG…PPFHWMGYEL (191 aa). Residues Asp-706, Asp-781, and Asp-782 each contribute to the Mg(2+) site. An RT 'primer grip' region spans residues 823–831; that stretch reads FHWMGYELH. Positions 994-1010 match the Tryptophan repeat motif motif; the sequence is WEDWWHEYWQCTWIPEV. The RNase H type-1 domain maps to 1030-1153; the sequence is LEGVETYYVD…IDKLVSSGIR (124 aa). The Mg(2+) site is built by Asp-1039, Glu-1074, Asp-1094, and Asp-1145. The Integrase-type zinc-finger motif lies at 1159-1200; sequence QNIEPAQEEHEKYHSNEAQLREKFHLPALVAKQIVQSCSKCC. Residues His-1168, His-1172, Cys-1196, and Cys-1199 each coordinate Zn(2+). One can recognise an Integrase catalytic domain in the interval 1210–1360; that stretch reads TDASLGVWQI…TAGERIVNMI (151 aa). Mg(2+) contacts are provided by Asp-1220 and Asp-1272. Positions 1379–1426 form a DNA-binding region, integrase-type; it reads FKVYFREGRDQLWKGPGILLWKGEGAVVLKYQEEIKIVPRRKCKIIKD.

As to quaternary structure, homotrimer. Interacts with gp41 (via C-terminus). In terms of assembly, homodimer. The active site consists of two apposed aspartic acid residues. Heterodimer of p66 RT and p51 RT (RT p66/p51). Heterodimerization of RT is essential for DNA polymerase activity. Despite the sequence identities, p66 RT and p51 RT have distinct folding. As to quaternary structure, homotetramer; may further associate as a homohexadecamer. Requires Mg(2+) as cofactor. Specific enzymatic cleavages by the viral protease yield mature proteins. The protease is released by autocatalytic cleavage. The polyprotein is cleaved during and after budding, this process is termed maturation. Proteolytic cleavage of p66 RT removes the RNase H domain to yield the p51 RT subunit. In terms of processing, capsid protein p24 is phosphorylated.

The protein localises to the virion. The protein resides in the host nucleus. Its subcellular location is the host cytoplasm. It localises to the host cell membrane. The enzyme catalyses Specific for a P1 residue that is hydrophobic, and P1' variable, but often Pro.. The catalysed reaction is Endohydrolysis of RNA in RNA/DNA hybrids. Three different cleavage modes: 1. sequence-specific internal cleavage of RNA. Human immunodeficiency virus type 1 and Moloney murine leukemia virus enzymes prefer to cleave the RNA strand one nucleotide away from the RNA-DNA junction. 2. RNA 5'-end directed cleavage 13-19 nucleotides from the RNA end. 3. DNA 3'-end directed cleavage 15-20 nucleotides away from the primer terminus.. It catalyses the reaction 3'-end directed exonucleolytic cleavage of viral RNA-DNA hybrid.. It carries out the reaction DNA(n) + a 2'-deoxyribonucleoside 5'-triphosphate = DNA(n+1) + diphosphate. Its activity is regulated as follows. The viral protease is inhibited by many synthetic protease inhibitors (PIs), such as amprenavir, atazanavir, indinavir, loprinavir, nelfinavir, ritonavir and saquinavir. RT can be inhibited either by nucleoside RT inhibitors (NRTIs) or by non nucleoside RT inhibitors (NNRTIs). NRTIs act as chain terminators, whereas NNRTIs inhibit DNA polymerization by binding a small hydrophobic pocket near the RT active site and inducing an allosteric change in this region. Classical NRTIs are abacavir, adefovir (PMEA), didanosine (ddI), lamivudine (3TC), stavudine (d4T), tenofovir (PMPA), zalcitabine (ddC), and zidovudine (AZT). Classical NNRTIs are atevirdine (BHAP U-87201E), delavirdine, efavirenz (DMP-266), emivirine (I-EBU), and nevirapine (BI-RG-587). The tritherapies used as a basic effective treatment of AIDS associate two NRTIs and one NNRTI. Use of protease inhibitors in tritherapy regimens permit more ambitious therapeutic strategies. Gag-Pol polyprotein and Gag polyprotein may regulate their own translation, by the binding genomic RNA in the 5'-UTR. At low concentration, Gag-Pol and Gag would promote translation, whereas at high concentration, the polyproteins encapsidate genomic RNA and then shut off translation. In terms of biological role, matrix protein p17 has two main functions: in infected cell, it targets Gag and Gag-pol polyproteins to the plasma membrane via a multipartite membrane-binding signal, that includes its myristointegration complex. The myristoylation signal and the NLS exert conflicting influences its subcellular localization. The key regulation of these motifs might be phosphorylation of a portion of MA molecules on the C-terminal tyrosine at the time of virus maturation, by virion-associated cellular tyrosine kinase. Implicated in the release from host cell mediated by Vpu. Its function is as follows. Capsid protein p24 forms the conical core that encapsulates the genomic RNA-nucleocapsid complex in the virion. The core is constituted by capsid protein hexamer subunits. The core is disassembled soon after virion entry. Interaction with host PPIA/CYPA protects the virus from restriction by host TRIM5-alpha and from an unknown antiviral activity in host cells. This capsid restriction by TRIM5 is one of the factors which restricts SIV to the simian species. Functionally, nucleocapsid protein p7 encapsulates and protects viral dimeric unspliced (genomic) RNA. Binds these RNAs through its zinc fingers. Facilitates rearangement of nucleic acid secondary structure during retrotranscription of genomic RNA. This capability is referred to as nucleic acid chaperone activity. The aspartyl protease mediates proteolytic cleavages of Gag and Gag-Pol polyproteins during or shortly after the release of the virion from the plasma membrane. Cleavages take place as an ordered, step-wise cascade to yield mature proteins. This process is called maturation. Displays maximal activity during the budding process just prior to particle release from the cell. Also cleaves Nef and Vif, probably concomitantly with viral structural proteins on maturation of virus particles. Hydrolyzes host EIF4GI and PABP1 in order to shut off the capped cellular mRNA translation. The resulting inhibition of cellular protein synthesis serves to ensure maximal viral gene expression and to evade host immune response. In terms of biological role, reverse transcriptase/ribonuclease H (RT) is a multifunctional enzyme that converts the viral dimeric RNA genome into dsDNA in the cytoplasm, shortly after virus entry into the cell. This enzyme displays a DNA polymerase activity that can copy either DNA or RNA templates, and a ribonuclease H (RNase H) activity that cleaves the RNA strand of RNA-DNA heteroduplexes in a partially processive 3' to 5' endonucleasic mode. Conversion of viral genomic RNA into dsDNA requires many steps. A tRNA binds to the primer-binding site (PBS) situated at the 5'-end of the viral RNA. RT uses the 3' end of the tRNA primer to perform a short round of RNA-dependent minus-strand DNA synthesis. The reading proceeds through the U5 region and ends after the repeated (R) region which is present at both ends of viral RNA. The portion of the RNA-DNA heteroduplex is digested by the RNase H, resulting in a ssDNA product attached to the tRNA primer. This ssDNA/tRNA hybridizes with the identical R region situated at the 3' end of viral RNA. This template exchange, known as minus-strand DNA strong stop transfer, can be either intra- or intermolecular. RT uses the 3' end of this newly synthesized short ssDNA to perform the RNA-dependent minus-strand DNA synthesis of the whole template. RNase H digests the RNA template except for two polypurine tracts (PPTs) situated at the 5'-end and near the center of the genome. It is not clear if both polymerase and RNase H activities are simultaneous. RNase H can probably proceed both in a polymerase-dependent (RNA cut into small fragments by the same RT performing DNA synthesis) and a polymerase-independent mode (cleavage of remaining RNA fragments by free RTs). Secondly, RT performs DNA-directed plus-strand DNA synthesis using the PPTs that have not been removed by RNase H as primers. PPTs and tRNA primers are then removed by RNase H. The 3' and 5' ssDNA PBS regions hybridize to form a circular dsDNA intermediate. Strand displacement synthesis by RT to the PBS and PPT ends produces a blunt ended, linear dsDNA copy of the viral genome that includes long terminal repeats (LTRs) at both ends. Its function is as follows. Integrase catalyzes viral DNA integration into the host chromosome, by performing a series of DNA cutting and joining reactions. This enzyme activity takes place after virion entry into a cell and reverse transcription of the RNA genome in dsDNA. The first step in the integration process is 3' processing. This step requires a complex comprising the viral genome, matrix protein, Vpr and integrase. This complex is called the pre-integration complex (PIC). The integrase protein removes 2 nucleotides from each 3' end of the viral DNA, leaving recessed CA OH's at the 3' ends. In the second step, the PIC enters cell nucleus. This process is mediated through integrase and Vpr proteins, and allows the virus to infect a non dividing cell. This ability to enter the nucleus is specific of lentiviruses, other retroviruses cannot and rely on cell division to access cell chromosomes. In the third step, termed strand transfer, the integrase protein joins the previously processed 3' ends to the 5' ends of strands of target cellular DNA at the site of integration. The 5'-ends are produced by integrase-catalyzed staggered cuts, 5 bp apart. A Y-shaped, gapped, recombination intermediate results, with the 5'-ends of the viral DNA strands and the 3' ends of target DNA strands remaining unjoined, flanking a gap of 5 bp. The last step is viral DNA integration into host chromosome. This involves host DNA repair synthesis in which the 5 bp gaps between the unjoined strands are filled in and then ligated. Since this process occurs at both cuts flanking the SIV genome, a 5 bp duplication of host DNA is produced at the ends of SIV integration. Alternatively, Integrase may catalyze the excision of viral DNA just after strand transfer, this is termed disintegration. This chain is Gag-Pol polyprotein (gag-pol), found in Cercopithecidae (Old World monkeys).